A 330-amino-acid chain; its full sequence is Major ferric iron-binding protein (330 aa).

Residues 1 to 22 (MKTSIRYALLAAALTAATPALA) form the signal peptide. Fe cation-binding residues include H31, E79, Y217, and Y218.

The protein belongs to the bacterial solute-binding protein 1 family.

It localises to the periplasm. Functionally, this protein may be a central component in the iron-acquisition system. This chain is Major ferric iron-binding protein (fbp), found in Neisseria gonorrhoeae.